Reading from the N-terminus, the 207-residue chain is Outer-membrane lipoprotein LolB (207 aa).

Positions 1–21 (MTLPDFRLIRLLPLASLVLTA) are cleaved as a signal peptide. Residue Cys-22 is the site of N-palmitoyl cysteine attachment. A lipid anchor (S-diacylglycerol cysteine) is attached at Cys-22.

Belongs to the LolB family. As to quaternary structure, monomer.

The protein localises to the cell outer membrane. Plays a critical role in the incorporation of lipoproteins in the outer membrane after they are released by the LolA protein. The chain is Outer-membrane lipoprotein LolB from Salmonella typhi.